We begin with the raw amino-acid sequence, 381 residues long: 1-deoxy-D-xylulose 5-phosphate reductoisomerase (381 aa).

Positions 11, 12, 13, 14, 36, 37, and 121 each coordinate NADPH. Residue lysine 122 coordinates 1-deoxy-D-xylulose 5-phosphate. An NADPH-binding site is contributed by glutamate 123. Aspartate 147 provides a ligand contact to Mn(2+). 1-deoxy-D-xylulose 5-phosphate contacts are provided by serine 148, glutamate 149, serine 173, and histidine 196. Glutamate 149 serves as a coordination point for Mn(2+). Residue glycine 202 participates in NADPH binding. Serine 209, asparagine 214, lysine 215, and glutamate 218 together coordinate 1-deoxy-D-xylulose 5-phosphate. Glutamate 218 provides a ligand contact to Mn(2+).

Belongs to the DXR family. Mg(2+) serves as cofactor. It depends on Mn(2+) as a cofactor.

It catalyses the reaction 2-C-methyl-D-erythritol 4-phosphate + NADP(+) = 1-deoxy-D-xylulose 5-phosphate + NADPH + H(+). It functions in the pathway isoprenoid biosynthesis; isopentenyl diphosphate biosynthesis via DXP pathway; isopentenyl diphosphate from 1-deoxy-D-xylulose 5-phosphate: step 1/6. In terms of biological role, catalyzes the NADPH-dependent rearrangement and reduction of 1-deoxy-D-xylulose-5-phosphate (DXP) to 2-C-methyl-D-erythritol 4-phosphate (MEP). The chain is 1-deoxy-D-xylulose 5-phosphate reductoisomerase from Acetivibrio thermocellus (strain ATCC 27405 / DSM 1237 / JCM 9322 / NBRC 103400 / NCIMB 10682 / NRRL B-4536 / VPI 7372) (Clostridium thermocellum).